Here is a 538-residue protein sequence, read N- to C-terminus: Syncytin-2 (538 aa).

A signal peptide spans 1-15 (MGLLLLVLILTPLLA). At 31 to 478 (LLQSTGSPYS…GWLNWEGTWK (448 aa)) the chain is on the extracellular side. Positions 43-46 (CWLC) match the CXXC motif. Disulfide bonds link Cys-43-Cys-46, Cys-43-Cys-439, and Cys-431-Cys-438. 8 N-linked (GlcNAc...) asparagine glycosylation sites follow: Asn-133, Asn-146, Asn-177, Asn-220, Asn-241, Asn-247, Asn-312, and Asn-332. Residues 354-374 (FIPLLAGLGILAGTGTGIAGI) form a fusion peptide region. Positions 414 to 430 (LQNRRGLDMLTAAQGGI) match the CKS-17 motif. Positions 431-439 (CLALDEKCC) match the CX6CC motif. N-linked (GlcNAc...) asparagine glycosylation occurs at Asn-443. The chain crosses the membrane as a helical span at residues 479-499 (WFSWVLPFIGPFVSLLLLLLF). The Cytoplasmic portion of the chain corresponds to 500–538 (GPCLLNLITQFVSSRLQAIKLQTNLSAGRRPRTIQESPF).

This sequence belongs to the gamma type-C retroviral envelope protein family. HERV class-I FRD env subfamily. The surface and transmembrane proteins form a heterodimer. They are attached by non-covalent interactions or by a labile interchain disulfide bond. In terms of processing, specific enzymatic cleavages in vivo yield the mature SU and TM proteins. Post-translationally, the CXXC motif is highly conserved across a broad range of retroviral envelope proteins. It is thought to participate in the formation of a labile disulfide bond possibly with the CX6CC motif present in the transmembrane protein.

It localises to the cell membrane. This endogenous retroviral envelope protein has retained its original fusogenic properties and participates in trophoblast fusion and the formation of a syncytium during placenta morphogenesis. The interaction with MFSD2A is apparently important for this process. In terms of biological role, endogenous envelope proteins may have kept, lost or modified their original function during evolution and this one is unable to confer infectivity. In Hylobates moloch (Silvery gibbon), this protein is Syncytin-2 (ERVFRD-1).